We begin with the raw amino-acid sequence, 1220 residues long: Protein transport protein Sec31A (1220 aa).

7 WD repeats span residues 4–47 (KEVD…EIFE), 68–111 (RYHK…AGDK), 120–160 (KHTG…TPMT), 166–206 (QPPE…PIIK), 209–254 (DHSN…SPLR), 258–298 (NHAR…VLYE), and 301–342 (TNTQ…DGLR). The interaction with SEC13 stretch occupies residues 161 to 471 (PGAKTQPPED…IDASQTEFEK (311 aa)). A WD 8; interaction with SEC13 repeat occupies 397 to 430 (SFSFGGKLVTFENVRMPSHQGAEQQQQQHHVFIS). Phosphoserine occurs at positions 527 and 532. A Glycyl lysine isopeptide (Lys-Gly) (interchain with G-Cter in ubiquitin) cross-link involves residue lysine 647. Disordered regions lie at residues 791 to 908 (GEPV…NAYP) and 924 to 1096 (QLYA…GNTF). Position 799 is a phosphoserine (serine 799). The tract at residues 800-1113 (PKIPYEKQQL…TKKITKKPIP (314 aa)) is interaction with PDCD6. The ALG-2-binding site motif-2 (ABS-2) motif lies at 842–848 (GFIMHGN). Over residues 849 to 859 (VNPNAAGQLPT) the composition is skewed to polar residues. The span at 869-882 (PPYPQPQPYQPAQP) shows a compositional bias: pro residues. Low complexity predominate over residues 962-972 (PSSSAYALPPG). Polar residues-rich tracts occupy residues 984 to 995 (PASQRTGPQNGW) and 1031 to 1053 (PQSQ…SSFP). Threonine 1161 is subject to Phosphothreonine. A Phosphoserine modification is found at serine 1163. Lysine 1217 participates in a covalent cross-link: Glycyl lysine isopeptide (Lys-Gly) (interchain with G-Cter in ubiquitin).

The protein belongs to the WD repeat SEC31 family. COPII is composed of at least 5 proteins: the SEC23/24 complex, the SEC13/31 complex and SAR1. SEC13 and SEC31 make a 2:2 tetramer that forms the edge element of the COPII outer coat. The tetramer self-assembles in multiple copies to form the complete polyhedral cage. Interacts (via WD 8) with SEC13. Interacts with PDCD6; interaction takes place in response to cytosolic calcium increase and leads to bridge together the BCR(KLHL12) complex and SEC31A, leading to monoubiquitination. Interacts with KLHL12. In terms of processing, monoubiquitinated by the BCR(KLHL12) E3 ubiquitin ligase complex, leading to regulate the size of COPII coats. Abundantly and ubiquitously expressed.

Its subcellular location is the cytoplasm. It is found in the cytoplasmic vesicle. The protein resides in the COPII-coated vesicle membrane. The protein localises to the endoplasmic reticulum membrane. It localises to the cytosol. Component of the coat protein complex II (COPII) which promotes the formation of transport vesicles from the endoplasmic reticulum (ER). The coat has two main functions, the physical deformation of the endoplasmic reticulum membrane into vesicles and the selection of cargo molecules. The sequence is that of Protein transport protein Sec31A (SEC31A) from Homo sapiens (Human).